The sequence spans 119 residues: Protein BEX4 (119 aa).

Residues 1–53 form a disordered region; that stretch reads MESKEELAANNLNGENAQQENEGREQAPTQNEETRHLGGGEGQKPGGNIRRGR. Residues 8–20 show a composition bias toward low complexity; it reads AANNLNGENAQQE. The tract at residues 31–89 is interaction with SIRT2; sequence NEETRHLGGGEGQKPGGNIRRGRVRRLVPNFRWAIPNRHIEHNEARDDVERFVGQMMEI. The segment at 31–119 is interaction with alpha-tubulin; that stretch reads NEETRHLGGG…DNHYDFCLIP (89 aa). Cysteine 116 contributes to the Zn(2+) binding site.

This sequence belongs to the BEX family. As to quaternary structure, interacts with alpha-tubulin. Interacts with SIRT2. Post-translationally, ubiquitinated and degraded by the proteasome.

It localises to the cytoplasm. It is found in the cytoskeleton. The protein localises to the spindle pole. Its subcellular location is the nucleus. May play a role in microtubule deacetylation by negatively regulating the SIRT2 deacetylase activity toward alpha-tubulin and thereby participate in the control of cell cycle progression and genomic stability. In absence of reductive stress, acts as a pseudosubstrate for the CRL2(FEM1B) complex: associates with FEM1B via zinc, thereby preventing association between FEM1B and its substrates. This Pongo abelii (Sumatran orangutan) protein is Protein BEX4.